The primary structure comprises 241 residues: Endo-chitosanase B (241 aa).

A signal peptide spans 1-17 (MRLSEILAVALVTGATA). A glycan (N-linked (GlcNAc...) asparagine) is linked at asparagine 86.

It belongs to the glycosyl hydrolase 75 family.

It is found in the secreted. It carries out the reaction Endohydrolysis of beta-(1-&gt;4)-linkages between D-glucosamine residues in a partly acetylated chitosan.. Functionally, chitosanase catalyzing the endo-type cleavage of chitosan, the deacylated form of chitin. Chitosanase may be crucial in the degradation of the deacetylated portion of chitin in the fungal cell wall. Chitoolisaccharides produced by the hydrolysis of partially N-acetylated chitosan are known to have many biological activities, including antibacterial activity, immune-enhancing effects, and elicitor activity. This is Endo-chitosanase B (csnB) from Aspergillus oryzae (strain ATCC 42149 / RIB 40) (Yellow koji mold).